The chain runs to 145 residues: D-aminoacyl-tRNA deacylase (145 aa).

Positions 137–138 (GP) match the Gly-cisPro motif, important for rejection of L-amino acids motif.

It belongs to the DTD family. In terms of assembly, homodimer.

The protein localises to the cytoplasm. The enzyme catalyses glycyl-tRNA(Ala) + H2O = tRNA(Ala) + glycine + H(+). It carries out the reaction a D-aminoacyl-tRNA + H2O = a tRNA + a D-alpha-amino acid + H(+). An aminoacyl-tRNA editing enzyme that deacylates mischarged D-aminoacyl-tRNAs. Also deacylates mischarged glycyl-tRNA(Ala), protecting cells against glycine mischarging by AlaRS. Acts via tRNA-based rather than protein-based catalysis; rejects L-amino acids rather than detecting D-amino acids in the active site. By recycling D-aminoacyl-tRNA to D-amino acids and free tRNA molecules, this enzyme counteracts the toxicity associated with the formation of D-aminoacyl-tRNA entities in vivo and helps enforce protein L-homochirality. The chain is D-aminoacyl-tRNA deacylase from Salmonella enteritidis PT4 (strain P125109).